The sequence spans 126 residues: MNLIETLEQEEIARLGKIIPEFAPGDTVVVSVNVVEGARKRVQAYEGVVIAKRNRGLNSAFTVRKISSGEGVERTFQTYSPLIAAIEVKRRGDVRRAKLYYLRDRSGKSARIKEKLPARKIKTAAV.

This sequence belongs to the bacterial ribosomal protein bL19 family.

In terms of biological role, this protein is located at the 30S-50S ribosomal subunit interface and may play a role in the structure and function of the aminoacyl-tRNA binding site. The polypeptide is Large ribosomal subunit protein bL19 (Albidiferax ferrireducens (strain ATCC BAA-621 / DSM 15236 / T118) (Rhodoferax ferrireducens)).